We begin with the raw amino-acid sequence, 158 residues long: uncharacterized protein (158 aa).

This is an uncharacterized protein from Mycobacterium tuberculosis (strain CDC 1551 / Oshkosh).